We begin with the raw amino-acid sequence, 172 residues long: Small integral membrane protein 23 (172 aa).

The Cytoplasmic portion of the chain corresponds to Met1–Thr36. The chain crosses the membrane as a helical; Signal-anchor for type II membrane protein span at residues Leu37–Gly53. Residues Ser54 to Leu172 are Extracellular-facing. Residues Leu96–Leu128 adopt a coiled-coil conformation.

The protein localises to the cell membrane. The polypeptide is Small integral membrane protein 23 (SMIM23) (Homo sapiens (Human)).